A 472-amino-acid polypeptide reads, in one-letter code: Tryptophanase (472 aa).

Lys-270 carries the post-translational modification N6-(pyridoxal phosphate)lysine.

It belongs to the beta-eliminating lyase family. As to quaternary structure, homotetramer. It depends on pyridoxal 5'-phosphate as a cofactor.

It carries out the reaction L-tryptophan + H2O = indole + pyruvate + NH4(+). It participates in amino-acid degradation; L-tryptophan degradation via pyruvate pathway; indole and pyruvate from L-tryptophan: step 1/1. The chain is Tryptophanase (tnaA) from Haemophilus influenzae.